The sequence spans 150 residues: D-aminoacyl-tRNA deacylase (150 aa).

A Gly-cisPro motif, important for rejection of L-amino acids motif is present at residues 138–139 (GP).

The protein belongs to the DTD family. As to quaternary structure, homodimer.

Its subcellular location is the cytoplasm. It carries out the reaction glycyl-tRNA(Ala) + H2O = tRNA(Ala) + glycine + H(+). The enzyme catalyses a D-aminoacyl-tRNA + H2O = a tRNA + a D-alpha-amino acid + H(+). An aminoacyl-tRNA editing enzyme that deacylates mischarged D-aminoacyl-tRNAs. Also deacylates mischarged glycyl-tRNA(Ala), protecting cells against glycine mischarging by AlaRS. Acts via tRNA-based rather than protein-based catalysis; rejects L-amino acids rather than detecting D-amino acids in the active site. By recycling D-aminoacyl-tRNA to D-amino acids and free tRNA molecules, this enzyme counteracts the toxicity associated with the formation of D-aminoacyl-tRNA entities in vivo and helps enforce protein L-homochirality. In Chromobacterium violaceum (strain ATCC 12472 / DSM 30191 / JCM 1249 / CCUG 213 / NBRC 12614 / NCIMB 9131 / NCTC 9757 / MK), this protein is D-aminoacyl-tRNA deacylase.